Reading from the N-terminus, the 184-residue chain is Large ribosomal subunit protein uL5 (184 aa).

It belongs to the universal ribosomal protein uL5 family. Part of the 50S ribosomal subunit; part of the 5S rRNA/L5/L18/L25 subcomplex. Contacts the 5S rRNA and the P site tRNA. Forms a bridge to the 30S subunit in the 70S ribosome.

In terms of biological role, this is one of the proteins that bind and probably mediate the attachment of the 5S RNA into the large ribosomal subunit, where it forms part of the central protuberance. In the 70S ribosome it contacts protein S13 of the 30S subunit (bridge B1b), connecting the 2 subunits; this bridge is implicated in subunit movement. Contacts the P site tRNA; the 5S rRNA and some of its associated proteins might help stabilize positioning of ribosome-bound tRNAs. This is Large ribosomal subunit protein uL5 from Thermotoga sp. (strain RQ2).